An 805-amino-acid polypeptide reads, in one-letter code: Transcription factor E2f1 (805 aa).

Disordered stretches follow at residues A9–H45, A119–D208, and P224–A255. Composition is skewed to low complexity over residues N12–Y37 and A119–Q134. Polar residues-rich tracts occupy residues R144–T154 and H181–P195. A PIP-box K+4 motif motif is present at residues T147 to R161. Residues A240–S249 are compositionally biased toward low complexity. A DNA-binding region spans residues N253–R318. The segment at R318 to I411 is dimerization. The residue at position 434 (S434) is a Phosphoserine. Disordered stretches follow at residues S578–S650 and G714–S743. 2 stretches are compositionally biased toward low complexity: residues A595–N615 and S623–S636. Residues Q637 to Q647 show a composition bias toward polar residues.

Belongs to the E2F/DP family. In terms of assembly, heterodimer of E2f and Dp. Cooperates to give sequence-specific DNA binding and optimal trans-activation. Interacts with PCNA. Ubiquitinated by the DCX(DTL) complex, also named CRL4(CDT2) complex, leading to its degradation during S phase. Ubiquitination by the DCX(DTL) complex is essential for cell cycle control and is PCNA-dependent: interacts with PCNA via its PIP-box, while the presence of the containing the 'K+4' motif in the PIP box, recruit the DCX(DTL) complex, leading to its degradation. Segmentally repeated expression throughout early embryos is restricted to the ventral nerve cord in later embryos.

The protein localises to the nucleus. Its function is as follows. Transcriptional activator that binds to E2f sites. Required for wild-type growth in mitotic and polytene tissues, Contributes to the expression of replication genes at the G1-S transition and Cyclin E. Activates cell proliferation in wing imaginal disk, which requires expression of vg. This chain is Transcription factor E2f1, found in Drosophila melanogaster (Fruit fly).